An 82-amino-acid chain; its full sequence is Small ribosomal subunit protein uS17 (82 aa).

This sequence belongs to the universal ribosomal protein uS17 family. As to quaternary structure, part of the 30S ribosomal subunit.

In terms of biological role, one of the primary rRNA binding proteins, it binds specifically to the 5'-end of 16S ribosomal RNA. The chain is Small ribosomal subunit protein uS17 from Ehrlichia ruminantium (strain Gardel).